The sequence spans 238 residues: Ribonuclease PH (238 aa).

Phosphate contacts are provided by residues arginine 86 and 124-126 (GTR).

Belongs to the RNase PH family. Homohexameric ring arranged as a trimer of dimers.

It carries out the reaction tRNA(n+1) + phosphate = tRNA(n) + a ribonucleoside 5'-diphosphate. Phosphorolytic 3'-5' exoribonuclease that plays an important role in tRNA 3'-end maturation. Removes nucleotide residues following the 3'-CCA terminus of tRNAs; can also add nucleotides to the ends of RNA molecules by using nucleoside diphosphates as substrates, but this may not be physiologically important. Probably plays a role in initiation of 16S rRNA degradation (leading to ribosome degradation) during starvation. The protein is Ribonuclease PH of Citrobacter koseri (strain ATCC BAA-895 / CDC 4225-83 / SGSC4696).